The primary structure comprises 250 residues: Probable transcriptional regulatory protein SACE_2018 (250 aa).

Belongs to the TACO1 family.

It is found in the cytoplasm. The chain is Probable transcriptional regulatory protein SACE_2018 from Saccharopolyspora erythraea (strain ATCC 11635 / DSM 40517 / JCM 4748 / NBRC 13426 / NCIMB 8594 / NRRL 2338).